A 285-amino-acid polypeptide reads, in one-letter code: MNKELESIYQNIANQSELGQTANYDSYYNPKRLYPIPRAPKRQEINLDPNSTTFYGFDCWNHYEVSWLNSKGKPVVAMAVISYDCHSPCIIESKSLKLYFNSLNNSTFPDVETVVQTISKDLSHCIGSEVAVNVYPLSEIASQTIYAAFDGICLDKLDIECSVYHVMPDFLSTSSKLVEEVLYSDLLKSNCLVTNQPDWGSVQIIYKGKKINHEGLLKYLISFRNHNEFHEQCIERIFADIMRFCQPESLAVYGRYTRRGGLDINPIRSTEPCAFDGQNIRLIRQ.

Residue 91-93 (IES) participates in substrate binding. 93 to 94 (SK) is an NADPH binding site. The active-site Thioimide intermediate is C191. The active-site Proton donor is the D198. Residue 230-231 (HE) participates in substrate binding. Position 259–260 (259–260 (RG)) interacts with NADPH.

The protein belongs to the GTP cyclohydrolase I family. QueF type 2 subfamily. In terms of assembly, homodimer.

The protein localises to the cytoplasm. It carries out the reaction 7-aminomethyl-7-carbaguanine + 2 NADP(+) = 7-cyano-7-deazaguanine + 2 NADPH + 3 H(+). It functions in the pathway tRNA modification; tRNA-queuosine biosynthesis. Catalyzes the NADPH-dependent reduction of 7-cyano-7-deazaguanine (preQ0) to 7-aminomethyl-7-deazaguanine (preQ1). The polypeptide is NADPH-dependent 7-cyano-7-deazaguanine reductase (Legionella pneumophila (strain Paris)).